The primary structure comprises 153 residues: Large ribosomal subunit protein uL22 (153 aa).

The protein belongs to the universal ribosomal protein uL22 family. In terms of assembly, part of the 50S ribosomal subunit.

This protein binds specifically to 23S rRNA. It makes multiple contacts with different domains of the 23S rRNA in the assembled 50S subunit and ribosome. In terms of biological role, the globular domain of the protein is located near the polypeptide exit tunnel on the outside of the subunit, while an extended beta-hairpin is found that lines the wall of the exit tunnel in the center of the 70S ribosome. In Methanocella arvoryzae (strain DSM 22066 / NBRC 105507 / MRE50), this protein is Large ribosomal subunit protein uL22.